We begin with the raw amino-acid sequence, 357 residues long: uncharacterized protein (357 aa).

This is an uncharacterized protein from Mycobacterium bovis (strain ATCC BAA-935 / AF2122/97).